Reading from the N-terminus, the 629-residue chain is tRNA uridine 5-carboxymethylaminomethyl modification enzyme MnmG (629 aa).

FAD is bound by residues 13-18, valine 125, and serine 180; that span reads GGGHAG. 273–287 is an NAD(+) binding site; sequence GPRYCPSIEDKVMRF. Glutamine 370 contacts FAD.

The protein belongs to the MnmG family. In terms of assembly, homodimer. Heterotetramer of two MnmE and two MnmG subunits. It depends on FAD as a cofactor.

It is found in the cytoplasm. Its function is as follows. NAD-binding protein involved in the addition of a carboxymethylaminomethyl (cmnm) group at the wobble position (U34) of certain tRNAs, forming tRNA-cmnm(5)s(2)U34. The sequence is that of tRNA uridine 5-carboxymethylaminomethyl modification enzyme MnmG from Escherichia coli O139:H28 (strain E24377A / ETEC).